A 179-amino-acid chain; its full sequence is Large ribosomal subunit protein uL5 (179 aa).

This sequence belongs to the universal ribosomal protein uL5 family. Part of the 50S ribosomal subunit; part of the 5S rRNA/L5/L18/L25 subcomplex. Contacts the 5S rRNA and the P site tRNA. Forms a bridge to the 30S subunit in the 70S ribosome.

Its function is as follows. This is one of the proteins that bind and probably mediate the attachment of the 5S RNA into the large ribosomal subunit, where it forms part of the central protuberance. In the 70S ribosome it contacts protein S13 of the 30S subunit (bridge B1b), connecting the 2 subunits; this bridge is implicated in subunit movement. Contacts the P site tRNA; the 5S rRNA and some of its associated proteins might help stabilize positioning of ribosome-bound tRNAs. This is Large ribosomal subunit protein uL5 from Aromatoleum aromaticum (strain DSM 19018 / LMG 30748 / EbN1) (Azoarcus sp. (strain EbN1)).